The chain runs to 52 residues: Ornatin-B (52 aa).

The short motif at 42–44 is the Cell attachment site element; the sequence is RGD.

It belongs to the ornatin family.

Its subcellular location is the secreted. Its function is as follows. Potent inhibitor of fibrinogen interaction with platelet receptors expressed on glycoprotein IIb-IIIa complex. May prevent blood from clotting during either feeding and/or storage of ingested blood. The protein is Ornatin-B of Placobdella ornata (Turtle leech).